The following is a 446-amino-acid chain: Chromosomal replication initiator protein DnaA (446 aa).

A domain I, interacts with DnaA modulators region spans residues 1-81; sequence MENIADLWNS…AKLNIRFIIP (81 aa). A domain II region spans residues 81 to 109; it reads PQSQTEEEVDYPPAKAKKMNDESNHLPQS. A domain III, AAA+ region region spans residues 110 to 326; that stretch reads MLNPKYTFDT…GALIRVVAYS (217 aa). G154, G156, K157, and T158 together coordinate ATP. The tract at residues 327-446 is domain IV, binds dsDNA; that stretch reads SLINKDINAD…QIEEINDILK (120 aa).

Belongs to the DnaA family. As to quaternary structure, oligomerizes as a right-handed, spiral filament on DNA at oriC.

The protein localises to the cytoplasm. Plays an essential role in the initiation and regulation of chromosomal replication. ATP-DnaA binds to the origin of replication (oriC) to initiate formation of the DNA replication initiation complex once per cell cycle. Binds the DnaA box (a 9 base pair repeat at the origin) and separates the double-stranded (ds)DNA. Forms a right-handed helical filament on oriC DNA; dsDNA binds to the exterior of the filament while single-stranded (ss)DNA is stabiized in the filament's interior. The ATP-DnaA-oriC complex binds and stabilizes one strand of the AT-rich DNA unwinding element (DUE), permitting loading of DNA polymerase. After initiation quickly degrades to an ADP-DnaA complex that is not apt for DNA replication. Binds acidic phospholipids. This Bacillus cytotoxicus (strain DSM 22905 / CIP 110041 / 391-98 / NVH 391-98) protein is Chromosomal replication initiator protein DnaA.